The sequence spans 307 residues: Acetaldehyde dehydrogenase 2 (307 aa).

13–16 contacts NAD(+); it reads SGNI. Residue Cys132 is the Acyl-thioester intermediate of the active site. NAD(+) contacts are provided by residues 163–171 and Asn274; that span reads SIGPGTRAN.

This sequence belongs to the acetaldehyde dehydrogenase family.

It carries out the reaction acetaldehyde + NAD(+) + CoA = acetyl-CoA + NADH + H(+). This is Acetaldehyde dehydrogenase 2 from Methylibium petroleiphilum (strain ATCC BAA-1232 / LMG 22953 / PM1).